Consider the following 192-residue polypeptide: Fe/S biogenesis protein NfuA (192 aa).

C149 and C152 together coordinate [4Fe-4S] cluster.

The protein belongs to the NfuA family. Homodimer. The cofactor is [4Fe-4S] cluster.

In terms of biological role, involved in iron-sulfur cluster biogenesis. Binds a 4Fe-4S cluster, can transfer this cluster to apoproteins, and thereby intervenes in the maturation of Fe/S proteins. Could also act as a scaffold/chaperone for damaged Fe/S proteins. This Aeromonas salmonicida (strain A449) protein is Fe/S biogenesis protein NfuA.